The following is a 452-amino-acid chain: uncharacterized protein (452 aa).

The next 14 helical transmembrane spans lie at 8–28 (AVFLTAVASGTMLNPLNSSMI), 39–59 (FHLSFTTVSWLISSFYLASAV), 77–97 (FLFGLILVAVSAIGAPFAPTF), 100–122 (LLVMRLFQSVGSSAIYPSGVGLI), 134–156 (LAVLSIFASAMTALGPTAGGFLI), 161–183 (WPAIFIVNLPFIILSFLLGLYMF), 203–222 (LGIVLFAGGIIFLLSFLLSF), 226–243 (PHAVEGVLGLLLLCAFVW), 266–286 (AVYVQFILLNVFFYCLFFGLP), 302–322 (LFMLFMSGMSIVVSPLTGKWI), 330–350 (PIFAGALLMTAGAVLLTIFFI), 359–379 (LILSLLGIGYGLGNVALQAAM), 393–415 (GLFQTCRYLGSILSSVILGILFG), and 425–447 (MMGIIMIIAGGASLLMAVRFAAL).

It belongs to the major facilitator superfamily.

The protein localises to the cell membrane. This is an uncharacterized protein from Bacillus subtilis (strain 168).